Consider the following 260-residue polypeptide: Snake venom serine protease homolog 2 (260 aa).

A signal peptide spans 1–18; sequence MVLIRVLANLLVLQLSYA. The propeptide occupies 19 to 24; it reads QKSSEL. One can recognise a Peptidase S1 domain in the interval 25–251; the sequence is VIGGDECNIN…YTDWIQSIIA (227 aa). Cystine bridges form between C31–C165, C52–C68, C100–C258, C144–C212, C176–C191, and C202–C227. A glycan (N-linked (GlcNAc...) asparagine) is linked at N123. N253 carries an N-linked (GlcNAc...) asparagine glycan.

Belongs to the peptidase S1 family. Snake venom subfamily. As to expression, expressed by the venom gland.

The protein localises to the secreted. Snake venom serine protease homolog that may act in the hemostasis system of the prey. In Macrovipera lebetinus (Levantine viper), this protein is Snake venom serine protease homolog 2.